Consider the following 243-residue polypeptide: MSRTDDTGEESGVAVDPALNGADLTVRQRKVLEVIRTSVSERGYPPSIREIGDAVGLTSTSSVAHQLRALERKGYLRRDPNRPRAVDVRGLDEAVRAVTALPGAALEEPDTLAEDTGRPTPTFVPVLGRIAAGGPILAEQAVEDVFPLPRELVGDGSLFLLRVVGQSMVDAAICDGDWVVVRQQNVAENGDIVAAMIDGEATVKTFKRTGKDVWLMPHNPLFEPIPGNDARILGKVVTVIRKI.

The segment at residues 48–68 (IREIGDAVGLTSTSSVAHQLR) is a DNA-binding region (H-T-H motif). Catalysis depends on for autocatalytic cleavage activity residues Ser-167 and Lys-204.

The protein belongs to the peptidase S24 family. As to quaternary structure, homodimer.

It carries out the reaction Hydrolysis of Ala-|-Gly bond in repressor LexA.. Its function is as follows. Represses a number of genes involved in the response to DNA damage (SOS response), including recA and lexA. In the presence of single-stranded DNA, RecA interacts with LexA causing an autocatalytic cleavage which disrupts the DNA-binding part of LexA, leading to derepression of the SOS regulon and eventually DNA repair. This Nocardia farcinica (strain IFM 10152) protein is LexA repressor 2.